A 361-amino-acid chain; its full sequence is Peptide chain release factor 1 (361 aa).

Residue glutamine 237 is modified to N5-methylglutamine.

The protein belongs to the prokaryotic/mitochondrial release factor family. Methylated by PrmC. Methylation increases the termination efficiency of RF1.

It localises to the cytoplasm. Functionally, peptide chain release factor 1 directs the termination of translation in response to the peptide chain termination codons UAG and UAA. In Chromohalobacter salexigens (strain ATCC BAA-138 / DSM 3043 / CIP 106854 / NCIMB 13768 / 1H11), this protein is Peptide chain release factor 1.